A 354-amino-acid chain; its full sequence is MGEQPIFTTRAHVFQIDPSTKKNWVPASKQAVTVSYFYDVTRNSYRIISVDGAKVIINSTITPNMTFTKTSQKFGQWADSRANTVFGLGFSSEQQLTKFAEKFQEVREAARLARDKSQEKIETSSNHSQESGCETPSSTQASSVNGTDDEKASHASPADTHLKSENDKLKIALTQSAANVKKWEIELQTLRESNARLTTALQESAASVEQWKRQFSICRDENDRLRSKIEELEEQCGEINREKEKNTQLKRRIEELESEVREKEMELKDLRKQSEIIPQLMSECEYVSEKLEAAERDNQNLEDKVRSLKTDIEESKYRQRHLKGELKSFLEVLDGKIDDLHDFRRGLSKLGTDN.

The WH1 domain maps to 1–110; sequence MGEQPIFTTR…EKFQEVREAA (110 aa). The stretch at 92 to 120 forms a coiled coil; it reads SEQQLTKFAEKFQEVREAARLARDKSQEK. Residues 114 to 163 form a disordered region; the sequence is RDKSQEKIETSSNHSQESGCETPSSTQASSVNGTDDEKASHASPADTHLK. Positions 123-146 are enriched in polar residues; that stretch reads TSSNHSQESGCETPSSTQASSVNG. The stretch at 160 to 329 forms a coiled coil; that stretch reads THLKSENDKL…RHLKGELKSF (170 aa).

Belongs to the Homer family. In terms of assembly, isoform 1 and isoform 2 encode coiled-coil structures that mediate homo- and heteromultimerization. Interacts with NFATC2; interaction is reduced by AKT activation. Interacts with NFATC1 and NFATC4. Interacts with DAGLA (via PPXXF motif); this interaction is required for the cell membrane localization of DAGLA. In terms of tissue distribution, constitutively expressed in the adult hippocampus.

The protein resides in the cytoplasm. It localises to the cell membrane. Its subcellular location is the postsynaptic density. The protein localises to the synapse. It is found in the cell projection. The protein resides in the stereocilium. In terms of biological role, postsynaptic density scaffolding protein. Binds and cross-links cytoplasmic regions of GRM1, GRM5, ITPR1, DNM3, RYR1, RYR2, SHANK1 and SHANK3. By physically linking GRM1 and GRM5 with ER-associated ITPR1 receptors, it aids the coupling of surface receptors to intracellular calcium release. May also couple GRM1 to PI3 kinase through its interaction with AGAP2. Isoforms can be differently regulated and may play an important role in maintaining the plasticity at glutamatergic synapses. Required for normal hearing. Negatively regulates T cell activation by inhibiting the calcineurin-NFAT pathway. Acts by competing with calcineurin/PPP3CA for NFAT protein binding, hence preventing NFAT activation by PPP3CA. The chain is Homer protein homolog 2 from Rattus norvegicus (Rat).